A 475-amino-acid chain; its full sequence is ATP synthase subunit beta (475 aa).

Gly-155–Thr-162 contributes to the ATP binding site.

This sequence belongs to the ATPase alpha/beta chains family. In terms of assembly, F-type ATPases have 2 components, CF(1) - the catalytic core - and CF(0) - the membrane proton channel. CF(1) has five subunits: alpha(3), beta(3), gamma(1), delta(1), epsilon(1). CF(0) has three main subunits: a(1), b(2) and c(9-12). The alpha and beta chains form an alternating ring which encloses part of the gamma chain. CF(1) is attached to CF(0) by a central stalk formed by the gamma and epsilon chains, while a peripheral stalk is formed by the delta and b chains.

It localises to the cell inner membrane. The catalysed reaction is ATP + H2O + 4 H(+)(in) = ADP + phosphate + 5 H(+)(out). Its function is as follows. Produces ATP from ADP in the presence of a proton gradient across the membrane. The catalytic sites are hosted primarily by the beta subunits. The sequence is that of ATP synthase subunit beta from Rhizobium etli (strain CIAT 652).